Consider the following 705-residue polypeptide: Tetratricopeptide repeat protein 12 (705 aa).

At T71 the chain carries Phosphothreonine. TPR repeat units follow at residues 106-139 (ADAL…LKDM), 140-173 (KVLY…DEKC), and 174-207 (TKAY…NPKL).

In terms of tissue distribution, expressed in testis and in epithelial cells of trachea and bronchial tube.

It is found in the cytoplasm. In terms of biological role, cytoplasmic protein that plays a role in the proper assembly of dynein arm complexes in motile cilia in both respiratory cells and sperm flagella. In Homo sapiens (Human), this protein is Tetratricopeptide repeat protein 12 (TTC12).